An 847-amino-acid polypeptide reads, in one-letter code: Protein translocase subunit SecA (847 aa).

Residues glutamine 87, 105 to 109 (GEGKT), and aspartate 495 contribute to the ATP site. The disordered stretch occupies residues 828–847 (SSNSPSDARNRPIEHDDNAV). Residues 835 to 847 (ARNRPIEHDDNAV) are compositionally biased toward basic and acidic residues.

This sequence belongs to the SecA family. In terms of assembly, monomer and homodimer. Part of the essential Sec protein translocation apparatus which comprises SecA, SecYEG and auxiliary proteins SecDF. Other proteins may also be involved.

The protein resides in the cell membrane. The protein localises to the cytoplasm. It catalyses the reaction ATP + H2O + cellular proteinSide 1 = ADP + phosphate + cellular proteinSide 2.. Part of the Sec protein translocase complex. Interacts with the SecYEG preprotein conducting channel. Has a central role in coupling the hydrolysis of ATP to the transfer of proteins into and across the cell membrane, serving as an ATP-driven molecular motor driving the stepwise translocation of polypeptide chains across the membrane. In Tropheryma whipplei (strain TW08/27) (Whipple's bacillus), this protein is Protein translocase subunit SecA.